Consider the following 377-residue polypeptide: Histone deacetylase 8 (377 aa).

Residues Leu-14–Gly-324 are histone deacetylase. Ser-39 is subject to Phosphoserine. Asp-101 contributes to the substrate binding site. The Proton acceptor role is filled by His-143. Substrate is bound at residue Gly-151. Positions 178, 180, and 267 each coordinate a divalent metal cation. A substrate-binding site is contributed by Tyr-306.

The protein belongs to the histone deacetylase family. HD type 1 subfamily. In terms of assembly, interacts with CBFA2T3. Interacts with phosphorylated SMG5/EST1B; this interaction protects SMG5 from ubiquitin-mediated degradation. Associates with alpha-SMA (smooth muscle alpha-actin). It depends on a divalent metal cation as a cofactor. Post-translationally, phosphorylated by PKA on serine 39. Phosphorylation reduces deacetylase activity observed preferentially on histones H3 and H4.

The protein localises to the nucleus. Its subcellular location is the chromosome. It localises to the cytoplasm. The catalysed reaction is N(6)-acetyl-L-lysyl-[histone] + H2O = L-lysyl-[histone] + acetate. It carries out the reaction N(6)-acetyl-L-lysyl-[protein] + H2O = L-lysyl-[protein] + acetate. It catalyses the reaction N(6)-(2E)-butenoyl-L-lysyl-[protein] + H2O = (2E)-2-butenoate + L-lysyl-[protein]. With respect to regulation, its activity is inhibited by trichostatin A (TSA) and butyrate, 2 well known histone deacetylase inhibitors. histone deacetylase inhibitor. Histone deacetylase that catalyzes the deacetylation of lysine residues on the N-terminal part of the core histones (H2A, H2B, H3 and H4). Histone deacetylation gives a tag for epigenetic repression and plays an important role in transcriptional regulation, cell cycle progression and developmental events. Histone deacetylases act via the formation of large multiprotein complexes. Also involved in the deacetylation of cohesin complex protein SMC3 regulating release of cohesin complexes from chromatin. May play a role in smooth muscle cell contractility. In addition to protein deacetylase activity, also has protein-lysine deacylase activity: acts as a protein decrotonylase by mediating decrotonylation ((2E)-butenoyl) of histones. In Mus musculus (Mouse), this protein is Histone deacetylase 8 (Hdac8).